Here is a 366-residue protein sequence, read N- to C-terminus: 3-dehydroquinate synthase (366 aa).

Residues 75 to 80 (DGEQYK), 109 to 113 (GVIGD), 133 to 134 (TT), Lys-146, Lys-155, and 173 to 176 (CLST) each bind NAD(+). The Zn(2+) site is built by Glu-188, His-251, and His-268.

This sequence belongs to the sugar phosphate cyclases superfamily. Dehydroquinate synthase family. It depends on NAD(+) as a cofactor. Co(2+) is required as a cofactor. The cofactor is Zn(2+).

It is found in the cytoplasm. The enzyme catalyses 7-phospho-2-dehydro-3-deoxy-D-arabino-heptonate = 3-dehydroquinate + phosphate. It functions in the pathway metabolic intermediate biosynthesis; chorismate biosynthesis; chorismate from D-erythrose 4-phosphate and phosphoenolpyruvate: step 2/7. Functionally, catalyzes the conversion of 3-deoxy-D-arabino-heptulosonate 7-phosphate (DAHP) to dehydroquinate (DHQ). In Vibrio parahaemolyticus serotype O3:K6 (strain RIMD 2210633), this protein is 3-dehydroquinate synthase.